A 637-amino-acid chain; its full sequence is MPVITLPDGSKREFSNPVTVLDVAADIGPGLAKAAVAGKVDGTLVDCSHVIDKDAELAIVTERDAEGVEVIRHSSAHLLAMAVQSIFPSAQVTIGPVIEDGFYYDFAFERPFTPDDLVKIEEKMQELSDADLPVTRSLMSRSEAVELFKKMGEEYKVEIIASIPTEENLSFYSQGDFIDLCRGPHVPSTGKIKAFKLTKVAGAYWRGDSNNAMLQRIYGTAWGNKKDLKAYLHRIEEAEKRDHRKIGKKLGLFHMQEEAPGMVFWHSDGWTLYQVIEQYMRKQLRKHDYKEIKTPQVVERTLWEKSGHWEKFRDDMFTTQSEDRDFAIKPMNCPCHVQVFNQGLRSYRDLPLRLAEFGSCHRNEASGALHGLMRVRGFTQDDAHIFCTEEQIQEEVGKFIDFLHEVYADFGFSEIIYKLSTRPEKRVGSDEIWDKSEKALADALDAKGLPWEELPGEGAFYGPKVEFSLKDCLGRLWQCGTVQVDFSMPGRLGAQYVSDEQVRKTPVMLHRAILGSFERFIGILIEHYEGAFPSWLAPTQVAILNITDKQADYCKKIGEILNDKGFRVRLDLRNEKINYKIREHTLNRVPFLAVVGDKEVETQCLAIRTRQGEDLGVMSISAFEELLQNEEAKRSRS.

The 61-residue stretch at 1 to 61 (MPVITLPDGS…DKDAELAIVT (61 aa)) folds into the TGS domain. A catalytic region spans residues 242-533 (DHRKIGKKLG…LIEHYEGAFP (292 aa)). Zn(2+)-binding residues include Cys-333, His-384, and His-510.

It belongs to the class-II aminoacyl-tRNA synthetase family. In terms of assembly, homodimer. Zn(2+) is required as a cofactor.

Its subcellular location is the cytoplasm. It catalyses the reaction tRNA(Thr) + L-threonine + ATP = L-threonyl-tRNA(Thr) + AMP + diphosphate + H(+). Functionally, catalyzes the attachment of threonine to tRNA(Thr) in a two-step reaction: L-threonine is first activated by ATP to form Thr-AMP and then transferred to the acceptor end of tRNA(Thr). Also edits incorrectly charged L-seryl-tRNA(Thr). The polypeptide is Threonine--tRNA ligase (Hahella chejuensis (strain KCTC 2396)).